The primary structure comprises 438 residues: Xylose isomerase (438 aa).

Residues H100 and D103 contribute to the active site. Mg(2+)-binding residues include E231, E267, H270, D295, D306, D308, and D338.

This sequence belongs to the xylose isomerase family. Homotetramer. Requires Mg(2+) as cofactor.

Its subcellular location is the cytoplasm. It carries out the reaction alpha-D-xylose = alpha-D-xylulofuranose. The sequence is that of Xylose isomerase from Pseudomonas fluorescens (strain Pf0-1).